A 461-amino-acid chain; its full sequence is Bifunctional protein GlmU (461 aa).

Residues 1–229 (MEKYVVVLAA…FSESLGVNDR (229 aa)) form a pyrophosphorylase region. Residues 8-11 (LAAG), Lys22, Gln72, and 77-78 (GT) contribute to the UDP-N-acetyl-alpha-D-glucosamine site. Residue Asp102 coordinates Mg(2+). UDP-N-acetyl-alpha-D-glucosamine is bound by residues Gly139, Glu154, Asn169, and Asn227. A Mg(2+)-binding site is contributed by Asn227. The interval 230–250 (IALAEATRIMQRRINEGHMRD) is linker. Positions 251–461 (GVTFIDPATA…LPLSEDEEWK (211 aa)) are N-acetyltransferase. UDP-N-acetyl-alpha-D-glucosamine contacts are provided by Arg332 and Lys350. The Proton acceptor role is filled by His362. The UDP-N-acetyl-alpha-D-glucosamine site is built by Tyr365 and Asn376. 2 residues coordinate acetyl-CoA: Ala422 and Arg439.

It in the N-terminal section; belongs to the N-acetylglucosamine-1-phosphate uridyltransferase family. The protein in the C-terminal section; belongs to the transferase hexapeptide repeat family. Homotrimer. It depends on Mg(2+) as a cofactor.

It is found in the cytoplasm. It carries out the reaction alpha-D-glucosamine 1-phosphate + acetyl-CoA = N-acetyl-alpha-D-glucosamine 1-phosphate + CoA + H(+). The enzyme catalyses N-acetyl-alpha-D-glucosamine 1-phosphate + UTP + H(+) = UDP-N-acetyl-alpha-D-glucosamine + diphosphate. It functions in the pathway nucleotide-sugar biosynthesis; UDP-N-acetyl-alpha-D-glucosamine biosynthesis; N-acetyl-alpha-D-glucosamine 1-phosphate from alpha-D-glucosamine 6-phosphate (route II): step 2/2. Its pathway is nucleotide-sugar biosynthesis; UDP-N-acetyl-alpha-D-glucosamine biosynthesis; UDP-N-acetyl-alpha-D-glucosamine from N-acetyl-alpha-D-glucosamine 1-phosphate: step 1/1. It participates in bacterial outer membrane biogenesis; LPS lipid A biosynthesis. In terms of biological role, catalyzes the last two sequential reactions in the de novo biosynthetic pathway for UDP-N-acetylglucosamine (UDP-GlcNAc). The C-terminal domain catalyzes the transfer of acetyl group from acetyl coenzyme A to glucosamine-1-phosphate (GlcN-1-P) to produce N-acetylglucosamine-1-phosphate (GlcNAc-1-P), which is converted into UDP-GlcNAc by the transfer of uridine 5-monophosphate (from uridine 5-triphosphate), a reaction catalyzed by the N-terminal domain. This Lactobacillus delbrueckii subsp. bulgaricus (strain ATCC BAA-365 / Lb-18) protein is Bifunctional protein GlmU.